The following is a 256-amino-acid chain: MHLIVASRSDPASVRMLDYLTEKYTFSEKGGVLNHGDFDLVIIEDRHIFHDMSLSGKYDYLVVLSRHSSAADVKSLTAHPTGNFGPSADLGGKPRTINISCPRVMSGTLRRMMESYSGSRFEVTFEATHHGPIFDIPNYYVEIGTTENEWNDPEALSTTVDSVMNPDVRDYDAFVGVGGGHYAPKIKEYFRENSVNIGHIISKHDHDALEPWEIDMAVKRTPGCKGFIMDRKGTRGNVREMVKKYADENSLELITI.

This sequence belongs to the DtdA deacylase family. As to quaternary structure, monomer. It depends on Zn(2+) as a cofactor.

It catalyses the reaction a D-aminoacyl-tRNA + H2O = a tRNA + a D-alpha-amino acid + H(+). The catalysed reaction is glycyl-tRNA(Ala) + H2O = tRNA(Ala) + glycine + H(+). D-aminoacyl-tRNA deacylase with broad substrate specificity. By recycling D-aminoacyl-tRNA to D-amino acids and free tRNA molecules, this enzyme counteracts the toxicity associated with the formation of D-aminoacyl-tRNA entities in vivo. This is D-aminoacyl-tRNA deacylase from Thermoplasma acidophilum (strain ATCC 25905 / DSM 1728 / JCM 9062 / NBRC 15155 / AMRC-C165).